The sequence spans 262 residues: Thrombin-like enzyme calobin-1 (262 aa).

Positions 1–18 (MVLISVLANLLILQLSYA) are cleaved as a signal peptide. Positions 19–24 (QKSSEL) are excised as a propeptide. The Peptidase S1 domain maps to 25–253 (VIGGDECNIN…HLDWIQSIIA (229 aa)). Disulfide bonds link Cys-31–Cys-165, Cys-52–Cys-68, Cys-100–Cys-260, Cys-144–Cys-214, Cys-176–Cys-193, and Cys-204–Cys-229. His-67 acts as the Charge relay system in catalysis. Residue Asn-105 is glycosylated (N-linked (GlcNAc...) asparagine). Asp-112 functions as the Charge relay system in the catalytic mechanism. The active-site Charge relay system is the Ser-208.

This sequence belongs to the peptidase S1 family. Snake venom subfamily. In terms of assembly, monomer. Post-translationally, N-glycosylated. As to expression, expressed by the venom gland.

Its subcellular location is the secreted. Strongly inhibited by PMSF, and moderately by benzamidine and soybean trypsin inhibitor. In terms of biological role, thrombin-like snake venom serine protease. Has a coagulant activity. Acts on alpha-chains of fibrinogen (FGA) generating fibrinopeptide A. The polypeptide is Thrombin-like enzyme calobin-1 (Gloydius ussuriensis (Ussuri mamushi)).